We begin with the raw amino-acid sequence, 272 residues long: Protein FAM210A (272 aa).

Residues 117-229 (DKSISLYQRF…GYMSTPPPVK (113 aa)) form the DUF1279 domain. The chain crosses the membrane as a helical span at residues 136-156 (VLIPVHLITSGVWFGTFYYAA). Residues 229–271 (KEYLQDRMEETKELITEKMEETKDRLTEKLQETKEKVSFKKKV) adopt a coiled-coil conformation. The disordered stretch occupies residues 246 to 272 (KMEETKDRLTEKLQETKEKVSFKKKVE).

This sequence belongs to the FAM210 family. Interacts with ATAD3A.

Its subcellular location is the membrane. It localises to the mitochondrion. It is found in the cytoplasm. May play a role in the structure and strength of both muscle and bone. The polypeptide is Protein FAM210A (FAM210A) (Pongo abelii (Sumatran orangutan)).